The primary structure comprises 442 residues: ATP-dependent protease ATPase subunit HslU (442 aa).

ATP contacts are provided by residues Ile-18, 60 to 65 (GVGKTE), Asp-255, Glu-320, and Arg-392.

Belongs to the ClpX chaperone family. HslU subfamily. In terms of assembly, a double ring-shaped homohexamer of HslV is capped on each side by a ring-shaped HslU homohexamer. The assembly of the HslU/HslV complex is dependent on binding of ATP.

Its subcellular location is the cytoplasm. Its function is as follows. ATPase subunit of a proteasome-like degradation complex; this subunit has chaperone activity. The binding of ATP and its subsequent hydrolysis by HslU are essential for unfolding of protein substrates subsequently hydrolyzed by HslV. HslU recognizes the N-terminal part of its protein substrates and unfolds these before they are guided to HslV for hydrolysis. The sequence is that of ATP-dependent protease ATPase subunit HslU from Aeromonas salmonicida (strain A449).